Consider the following 715-residue polypeptide: Fatty acid oxidation complex subunit alpha (715 aa).

The segment at 1 to 190 (MIYEGKAITV…KVGAVDAVVA (190 aa)) is enoyl-CoA hydratase/isomerase. Substrate is bound at residue Asp297. The segment at 312-715 (HDVKQAAVLG…MAKNGQRFFN (404 aa)) is 3-hydroxyacyl-CoA dehydrogenase. Residues Met325, Asp344, 401 to 403 (VVE), Lys408, and Ser430 contribute to the NAD(+) site. Residue His451 is the For 3-hydroxyacyl-CoA dehydrogenase activity of the active site. NAD(+) is bound at residue Asn454. 2 residues coordinate substrate: Asn501 and Tyr660.

The protein in the N-terminal section; belongs to the enoyl-CoA hydratase/isomerase family. It in the C-terminal section; belongs to the 3-hydroxyacyl-CoA dehydrogenase family. As to quaternary structure, heterotetramer of two alpha chains (FadB) and two beta chains (FadA).

It carries out the reaction a (3S)-3-hydroxyacyl-CoA + NAD(+) = a 3-oxoacyl-CoA + NADH + H(+). It catalyses the reaction a (3S)-3-hydroxyacyl-CoA = a (2E)-enoyl-CoA + H2O. The enzyme catalyses a 4-saturated-(3S)-3-hydroxyacyl-CoA = a (3E)-enoyl-CoA + H2O. The catalysed reaction is (3S)-3-hydroxybutanoyl-CoA = (3R)-3-hydroxybutanoyl-CoA. It carries out the reaction a (3Z)-enoyl-CoA = a 4-saturated (2E)-enoyl-CoA. It catalyses the reaction a (3E)-enoyl-CoA = a 4-saturated (2E)-enoyl-CoA. It participates in lipid metabolism; fatty acid beta-oxidation. Functionally, involved in the aerobic and anaerobic degradation of long-chain fatty acids via beta-oxidation cycle. Catalyzes the formation of 3-oxoacyl-CoA from enoyl-CoA via L-3-hydroxyacyl-CoA. It can also use D-3-hydroxyacyl-CoA and cis-3-enoyl-CoA as substrate. The polypeptide is Fatty acid oxidation complex subunit alpha (Pseudomonas putida (strain ATCC 47054 / DSM 6125 / CFBP 8728 / NCIMB 11950 / KT2440)).